Consider the following 315-residue polypeptide: Olfactory receptor 5AN6 (315 aa).

The Extracellular segment spans residues 1–29 (MPGGRNSTVITKFILVGFSDFPKLKLVLF). The helical transmembrane segment at 30-50 (VIFLGSYLSTVVWNLGLIILI) threads the bilayer. At 51-54 (RIDP) the chain is on the cytoplasmic side. The helical transmembrane segment at 55–75 (YLHTPMYFFLSNLSFLDFCYI) threads the bilayer. Residues 76 to 99 (SSTTPKMLSGFFQKSKSISFVGCT) lie on the Extracellular side of the membrane. Residues Cys-98 and Cys-180 are joined by a disulfide bond. The chain crosses the membrane as a helical span at residues 100-120 (MQYFIFSSLGLSECCLLAAMA). Over 121–123 (YDR) the chain is Cytoplasmic. The helical transmembrane segment at 124 to 143 (YAAICNPLLYTAIMSPSLCV) threads the bilayer. His-144 is a topological domain (extracellular). Residues 145–165 (MVVGAYSTGLLGSLIQLCAIL) traverse the membrane as a helical segment. Residues 166–202 (QLHFCGPNIINHFFCDLPQLLVLSCSETFPLQVLKFV) lie on the Cytoplasmic side of the membrane. The chain crosses the membrane as a helical span at residues 203–223 (IAVIFGVASVIVILISYGYII). Topologically, residues 224–240 (GTILNISSVEGRSKAFN) are extracellular. The chain crosses the membrane as a helical span at residues 241 to 261 (TCASHLTAVTLFFGSGLFVYM). Residues 262 to 272 (RPSSNSSQGYD) lie on the Cytoplasmic side of the membrane. The helical transmembrane segment at 273–293 (KMASVFYTVVIPMLNPLIYSL) threads the bilayer. The Extracellular portion of the chain corresponds to 294-315 (RNKEIKDALQRCKNKCFSQCHC).

The protein belongs to the G-protein coupled receptor 1 family. Localized in the dorsomedial and ventral region of the olfactory bulb.

The protein localises to the cell membrane. Its function is as follows. Odorant receptor specific for muscone. Muscone-binding causes a conformation change that triggers signaling via G(s)-class of G alpha protein GNAL, activating adenylyl cyclase. The polypeptide is Olfactory receptor 5AN6 (Mus musculus (Mouse)).